A 67-amino-acid chain; its full sequence is Small, acid-soluble spore protein B (67 aa).

Belongs to the alpha/beta-type SASP family.

SASP are bound to spore DNA. They are double-stranded DNA-binding proteins that cause DNA to change to an a-like conformation. They protect the DNA backbone from chemical and enzymatic cleavage and are thus involved in dormant spore's high resistance to UV light. This Bacillus subtilis (strain 168) protein is Small, acid-soluble spore protein B (sspB).